The primary structure comprises 426 residues: MSKQINAIRGMNDLYGDQSHAFDYLVQTAESVLKQYGFQSIRLPIVEKTELFARSIGEVTDIVEKEMYTFEDRNGDSLTLRPEGTAGCVRAVIQNGLAHNQIQKLYYTGPMFRHERPQKGRYRQFNQFGVEVFGIESVDIDAELIALSARLWERLGLQNLELQINSLGSQAARQAYRDILVAYFEEHKSQLDEDSLRRLSTNPLRILDTKNPDMKALVEAAPKLMDHLDEASKQHYEELKAHLDDLGVAYVENPNLVRGLDYYNRTVFEWVTTELGAQGTVCAGGRYDGLVEQIGGKPTPAVGFAMGIERLMALLMDNELVHEENGPDVYMVLAGDSTKRPGLVISEQIRENLPDIKVQMNCGGGSFKSQFKKADKSGARIALVLGEDEVNQKQIAVKYLREEREQEMVPWDQMVTLLKTALTESK.

It belongs to the class-II aminoacyl-tRNA synthetase family. Homodimer.

It is found in the cytoplasm. The catalysed reaction is tRNA(His) + L-histidine + ATP = L-histidyl-tRNA(His) + AMP + diphosphate + H(+). The protein is Histidine--tRNA ligase of Hydrogenovibrio crunogenus (strain DSM 25203 / XCL-2) (Thiomicrospira crunogena).